The chain runs to 686 residues: Protein arginine N-methyltransferase 7 (686 aa).

SAM-dependent MTase PRMT-type domains lie at 5–352 (SDDY…FSWW) and 357–686 (DLSL…FKFD).

It belongs to the class I-like SAM-binding methyltransferase superfamily. Protein arginine N-methyltransferase family. PRMT7 subfamily.

In terms of biological role, essential arginine methyltransferase that can both catalyze the formation of omega-N monomethylarginine (MMA) and symmetrical dimethylarginine (sDMA). Specifically mediates the symmetrical dimethylation of arginine residues in the small nuclear ribonucleoproteins SmD1 and SmD3. This is Protein arginine N-methyltransferase 7 (Art7) from Aedes aegypti (Yellowfever mosquito).